The following is a 95-amino-acid chain: Aspartyl/glutamyl-tRNA(Asn/Gln) amidotransferase subunit C (95 aa).

Belongs to the GatC family. In terms of assembly, heterotrimer of A, B and C subunits.

It catalyses the reaction L-glutamyl-tRNA(Gln) + L-glutamine + ATP + H2O = L-glutaminyl-tRNA(Gln) + L-glutamate + ADP + phosphate + H(+). The enzyme catalyses L-aspartyl-tRNA(Asn) + L-glutamine + ATP + H2O = L-asparaginyl-tRNA(Asn) + L-glutamate + ADP + phosphate + 2 H(+). Its function is as follows. Allows the formation of correctly charged Asn-tRNA(Asn) or Gln-tRNA(Gln) through the transamidation of misacylated Asp-tRNA(Asn) or Glu-tRNA(Gln) in organisms which lack either or both of asparaginyl-tRNA or glutaminyl-tRNA synthetases. The reaction takes place in the presence of glutamine and ATP through an activated phospho-Asp-tRNA(Asn) or phospho-Glu-tRNA(Gln). In Halothermothrix orenii (strain H 168 / OCM 544 / DSM 9562), this protein is Aspartyl/glutamyl-tRNA(Asn/Gln) amidotransferase subunit C.